Reading from the N-terminus, the 192-residue chain is Peptidyl-tRNA hydrolase (192 aa).

His-17 provides a ligand contact to tRNA. His-22 (proton acceptor) is an active-site residue. 3 residues coordinate tRNA: Phe-68, Asn-70, and Asn-116.

This sequence belongs to the PTH family. Monomer.

It is found in the cytoplasm. The catalysed reaction is an N-acyl-L-alpha-aminoacyl-tRNA + H2O = an N-acyl-L-amino acid + a tRNA + H(+). Hydrolyzes ribosome-free peptidyl-tRNAs (with 1 or more amino acids incorporated), which drop off the ribosome during protein synthesis, or as a result of ribosome stalling. In terms of biological role, catalyzes the release of premature peptidyl moieties from peptidyl-tRNA molecules trapped in stalled 50S ribosomal subunits, and thus maintains levels of free tRNAs and 50S ribosomes. This chain is Peptidyl-tRNA hydrolase, found in Stenotrophomonas maltophilia (strain K279a).